Reading from the N-terminus, the 405-residue chain is Acetylornithine aminotransferase 2 (405 aa).

Pyridoxal 5'-phosphate contacts are provided by residues 105–106 and Phe-138; that span reads GT. Arg-141 contributes to the N(2)-acetyl-L-ornithine binding site. 224 to 227 provides a ligand contact to pyridoxal 5'-phosphate; sequence DEVQ. An N6-(pyridoxal phosphate)lysine modification is found at Lys-254. Ser-282 contacts N(2)-acetyl-L-ornithine. Thr-283 is a pyridoxal 5'-phosphate binding site.

This sequence belongs to the class-III pyridoxal-phosphate-dependent aminotransferase family. ArgD subfamily. As to quaternary structure, homodimer. It depends on pyridoxal 5'-phosphate as a cofactor.

Its subcellular location is the cytoplasm. It catalyses the reaction N(2)-acetyl-L-ornithine + 2-oxoglutarate = N-acetyl-L-glutamate 5-semialdehyde + L-glutamate. The protein operates within amino-acid biosynthesis; L-arginine biosynthesis; N(2)-acetyl-L-ornithine from L-glutamate: step 4/4. This Caulobacter vibrioides (strain ATCC 19089 / CIP 103742 / CB 15) (Caulobacter crescentus) protein is Acetylornithine aminotransferase 2.